We begin with the raw amino-acid sequence, 257 residues long: 1-acyl-sn-glycerol-3-phosphate acyltransferase (257 aa).

The helical transmembrane segment at 10–30 (VLFYLLLSASAFVWGTLSFFI) threads the bilayer. The HXXXXD motif signature appears at 82–87 (HQSTWE). The helical transmembrane segment at 105-125 (ELLYVPFFGWALALLKPIAID) threads the bilayer.

It belongs to the 1-acyl-sn-glycerol-3-phosphate acyltransferase family.

It is found in the cell inner membrane. It carries out the reaction a 1-acyl-sn-glycero-3-phosphate + an acyl-CoA = a 1,2-diacyl-sn-glycero-3-phosphate + CoA. It participates in phospholipid metabolism; CDP-diacylglycerol biosynthesis; CDP-diacylglycerol from sn-glycerol 3-phosphate: step 2/3. Its function is as follows. Converts lysophosphatidic acid (LPA) into phosphatidic acid by incorporating acyl moiety at the 2 position. The polypeptide is 1-acyl-sn-glycerol-3-phosphate acyltransferase (Pseudomonas aeruginosa (strain ATCC 15692 / DSM 22644 / CIP 104116 / JCM 14847 / LMG 12228 / 1C / PRS 101 / PAO1)).